A 348-amino-acid polypeptide reads, in one-letter code: Anthranilate phosphoribosyltransferase (348 aa).

Residues Gly-93, 96-97 (GD), Thr-101, 103-106 (NVST), 121-129 (KHGNRAVSS), and Ser-133 each bind 5-phospho-alpha-D-ribose 1-diphosphate. Gly-93 is an anthranilate binding site. Ser-105 lines the Mg(2+) pocket. Asn-124 provides a ligand contact to anthranilate. Arg-179 serves as a coordination point for anthranilate. Residues Asp-238 and Glu-239 each coordinate Mg(2+).

The protein belongs to the anthranilate phosphoribosyltransferase family. In terms of assembly, homodimer. It depends on Mg(2+) as a cofactor.

It carries out the reaction N-(5-phospho-beta-D-ribosyl)anthranilate + diphosphate = 5-phospho-alpha-D-ribose 1-diphosphate + anthranilate. It functions in the pathway amino-acid biosynthesis; L-tryptophan biosynthesis; L-tryptophan from chorismate: step 2/5. Catalyzes the transfer of the phosphoribosyl group of 5-phosphorylribose-1-pyrophosphate (PRPP) to anthranilate to yield N-(5'-phosphoribosyl)-anthranilate (PRA). The chain is Anthranilate phosphoribosyltransferase from Desulfotalea psychrophila (strain LSv54 / DSM 12343).